The chain runs to 237 residues: Beta-glucanase (237 aa).

The first 23 residues, Met-1–Ala-23, serve as a signal peptide directing secretion. Positions Val-28–Asn-237 constitute a GH16 domain. A disulfide bond links Cys-55 and Cys-84. Glu-128 serves as the catalytic Nucleophile. Glu-132 acts as the Proton donor in catalysis.

It belongs to the glycosyl hydrolase 16 family.

The enzyme catalyses Hydrolysis of (1-&gt;4)-beta-D-glucosidic linkages in beta-D-glucans containing (1-&gt;3)- and (1-&gt;4)-bonds.. The sequence is that of Beta-glucanase from Paenibacillus macerans (Bacillus macerans).